The primary structure comprises 377 residues: MPLIDLPGFAGDLLADFERRNTLRVDTPVIQPAEPFLDMAGEDLRRRIFMTESETGESLCLRPEFTIPVCLRHIETATGTPQRYAYLGEVFRQRRDGSSEFYQAGIEDLGDPDTAAADARVVGDALFVLSNRLPGERLKVTLGDQSVFEAVIAACGLPGGWQKRLIHAFGDQKQLDRLLAELADPKSPGVFGHDVERVAALGMLDDEERLVAHIGETMEATGYSTNASRSPRDIARRLKEKVELAATRLDKEALAVMRAFLALDLPLADAPAALHSFAGKARLRIDDALELFDARVAALALAGADPGPMRYRAAFGRPLDYYTGLVFEIHVEGTPAVLAGGGRFDRLLTLLGAREHIPAVGFSLWLDRIEQAAGREK.

The protein belongs to the class-II aminoacyl-tRNA synthetase family. HisZ subfamily. In terms of assembly, heteromultimer composed of HisG and HisZ subunits.

The protein localises to the cytoplasm. It functions in the pathway amino-acid biosynthesis; L-histidine biosynthesis; L-histidine from 5-phospho-alpha-D-ribose 1-diphosphate: step 1/9. Its function is as follows. Required for the first step of histidine biosynthesis. May allow the feedback regulation of ATP phosphoribosyltransferase activity by histidine. The protein is ATP phosphoribosyltransferase regulatory subunit of Sinorhizobium medicae (strain WSM419) (Ensifer medicae).